A 436-amino-acid chain; its full sequence is Enolase (436 aa).

A (2R)-2-phosphoglycerate-binding site is contributed by glutamine 167. The active-site Proton donor is glutamate 209. 3 residues coordinate Mg(2+): aspartate 246, glutamate 291, and aspartate 318. Lysine 343, arginine 372, serine 373, and lysine 394 together coordinate (2R)-2-phosphoglycerate. The Proton acceptor role is filled by lysine 343.

This sequence belongs to the enolase family. Component of the RNA degradosome, a multiprotein complex involved in RNA processing and mRNA degradation. It depends on Mg(2+) as a cofactor.

It localises to the cytoplasm. It is found in the secreted. Its subcellular location is the cell surface. The enzyme catalyses (2R)-2-phosphoglycerate = phosphoenolpyruvate + H2O. The protein operates within carbohydrate degradation; glycolysis; pyruvate from D-glyceraldehyde 3-phosphate: step 4/5. Catalyzes the reversible conversion of 2-phosphoglycerate (2-PG) into phosphoenolpyruvate (PEP). It is essential for the degradation of carbohydrates via glycolysis. The chain is Enolase from Haemophilus influenzae (strain 86-028NP).